A 292-amino-acid polypeptide reads, in one-letter code: Ribosomal RNA small subunit methyltransferase I (292 aa).

Belongs to the methyltransferase superfamily. RsmI family.

It is found in the cytoplasm. It carries out the reaction cytidine(1402) in 16S rRNA + S-adenosyl-L-methionine = 2'-O-methylcytidine(1402) in 16S rRNA + S-adenosyl-L-homocysteine + H(+). Catalyzes the 2'-O-methylation of the ribose of cytidine 1402 (C1402) in 16S rRNA. The sequence is that of Ribosomal RNA small subunit methyltransferase I from Bacillus subtilis (strain 168).